A 63-amino-acid polypeptide reads, in one-letter code: Large ribosomal subunit protein bL28 (63 aa).

Belongs to the bacterial ribosomal protein bL28 family.

The protein is Large ribosomal subunit protein bL28 of Dictyoglomus thermophilum (strain ATCC 35947 / DSM 3960 / H-6-12).